The following is a 581-amino-acid chain: Arginine--tRNA ligase (581 aa).

A 'HIGH' region motif is present at residues 126–136 (PNLAKEMHVGH).

This sequence belongs to the class-I aminoacyl-tRNA synthetase family. As to quaternary structure, monomer.

The protein localises to the cytoplasm. It catalyses the reaction tRNA(Arg) + L-arginine + ATP = L-arginyl-tRNA(Arg) + AMP + diphosphate. The chain is Arginine--tRNA ligase from Shewanella oneidensis (strain ATCC 700550 / JCM 31522 / CIP 106686 / LMG 19005 / NCIMB 14063 / MR-1).